A 398-amino-acid chain; its full sequence is Nicotinate phosphoribosyltransferase (398 aa).

Residue H214 is modified to Phosphohistidine; by autocatalysis.

This sequence belongs to the NAPRTase family. Transiently phosphorylated on a His residue during the reaction cycle. Phosphorylation strongly increases the affinity for substrates and increases the rate of nicotinate D-ribonucleotide production. Dephosphorylation regenerates the low-affinity form of the enzyme, leading to product release.

The enzyme catalyses nicotinate + 5-phospho-alpha-D-ribose 1-diphosphate + ATP + H2O = nicotinate beta-D-ribonucleotide + ADP + phosphate + diphosphate. It participates in cofactor biosynthesis; NAD(+) biosynthesis; nicotinate D-ribonucleotide from nicotinate: step 1/1. Catalyzes the synthesis of beta-nicotinate D-ribonucleotide from nicotinate and 5-phospho-D-ribose 1-phosphate at the expense of ATP. The chain is Nicotinate phosphoribosyltransferase from Xanthomonas campestris pv. campestris (strain 8004).